The primary structure comprises 188 residues: dCTP deaminase (188 aa).

Residues 111–116, 135–137, Gln-156, Tyr-170, and Gln-180 contribute to the dCTP site; these read KSTYAR and TLE. Glu-137 serves as the catalytic Proton donor/acceptor.

It belongs to the dCTP deaminase family. Homotrimer.

The catalysed reaction is dCTP + H2O + H(+) = dUTP + NH4(+). It functions in the pathway pyrimidine metabolism; dUMP biosynthesis; dUMP from dCTP (dUTP route): step 1/2. Its function is as follows. Catalyzes the deamination of dCTP to dUTP. The protein is dCTP deaminase of Thioalkalivibrio sulfidiphilus (strain HL-EbGR7).